The primary structure comprises 512 residues: NAD(P)H-quinone oxidoreductase chain 4, chloroplastic (512 aa).

A run of 14 helical transmembrane segments spans residues 4–24 (LPWLTIIVLFPILAGLLIPFI), 34–54 (WYALGVGILDFLLITYIFGYH), 87–107 (MPLVLLTGFVTTLAILGAWPV), 111–131 (AKLFYFLMLAMYSGQIGVFVS), 134–154 (LLLFFFMWELELIPVYLLLLV), 167–187 (FILYTAIGSIFILLAGLTMAF), 210–230 (ILLYIGFLIAYAVKLPAFPLH), 241–261 (HYSTCMLLAGILLKMGGYALI), 273–293 (LIFAPFLIIIGVINIIYAALT), 312–332 (MGFVLIGIGSLTNLGLSGAVL), 333–353 (QMISHGLIGASLFFLAGTTYD), 373–395 (TFAMFTTCSLASLALPGMSGFVA), 416–436 (IITFLEGIGIILTPIYLLSML), and 462–482 (IFVITCLVLPILGIGIYPKMA).

The protein belongs to the complex I subunit 4 family.

It localises to the plastid. It is found in the chloroplast thylakoid membrane. The enzyme catalyses a plastoquinone + NADH + (n+1) H(+)(in) = a plastoquinol + NAD(+) + n H(+)(out). It catalyses the reaction a plastoquinone + NADPH + (n+1) H(+)(in) = a plastoquinol + NADP(+) + n H(+)(out). In Chlorokybus atmophyticus (Soil alga), this protein is NAD(P)H-quinone oxidoreductase chain 4, chloroplastic.